The chain runs to 194 residues: Probable GTP-binding protein EngB (194 aa).

The EngB-type G domain maps to 22–194 (DLPEYALAGR…AWQFIKEGME (173 aa)). GTP-binding positions include 30 to 37 (GRSNVGKS), 57 to 61 (GKTQT), 75 to 78 (DVPG), 142 to 145 (TKAD), and 174 to 176 (FSS). Mg(2+) contacts are provided by Ser-37 and Thr-59.

It belongs to the TRAFAC class TrmE-Era-EngA-EngB-Septin-like GTPase superfamily. EngB GTPase family. Mg(2+) is required as a cofactor.

Its function is as follows. Necessary for normal cell division and for the maintenance of normal septation. This Listeria monocytogenes serovar 1/2a (strain ATCC BAA-679 / EGD-e) protein is Probable GTP-binding protein EngB.